The sequence spans 1442 residues: CD109 antigen (1442 aa).

A signal peptide spans 1-21; it reads MRSRRLLSAAHLLCLCAVALA. N-linked (GlcNAc...) asparagine glycans are attached at residues asparagine 67, asparagine 117, asparagine 246, asparagine 278, asparagine 370, and asparagine 421. Residues 595 to 704 are bait region (approximate); sequence DKSVTLMENS…TWIWLDAYMG (110 aa). The segment at residues 923-926 is a cross-link (isoglutamyl cysteine thioester (Cys-Gln)); it reads CGEQ. Asparagine 1088 carries N-linked (GlcNAc...) asparagine glycosylation. Alanine 1419 carries the GPI-anchor amidated alanine lipid modification. Positions 1420–1442 are cleaved as a propeptide — removed in mature form; it reads TDSLRRSSSLLVFCSVLLYFVQH.

This sequence belongs to the protease inhibitor I39 (alpha-2-macroglobulin) family. As to quaternary structure, heterodimer; disulfide-linked. Interacts with TGFB1 and TGFBR1. Forms a heteromeric complex with TGFBR1, TGFBR2 and TGFBR3 in a ligand-independent manner. In terms of processing, N-glycosylated. 2 forms of 150 (p150) and 120 kDa (p120) exist due to proteolytic degradation from a 180 kDa form.

Its subcellular location is the cell membrane. Functionally, modulates negatively TGFB1 signaling in keratinocytes. This Mus musculus (Mouse) protein is CD109 antigen (Cd109).